A 378-amino-acid chain; its full sequence is UPF0754 membrane protein BCAH820_0954 (378 aa).

Helical transmembrane passes span 1 to 21 (MNIWLSMLTTTGLGAIIGGFT) and 357 to 377 (YLGALLGGMIGIVQGLLLLFL).

The protein belongs to the UPF0754 family.

The protein localises to the cell membrane. The polypeptide is UPF0754 membrane protein BCAH820_0954 (Bacillus cereus (strain AH820)).